The primary structure comprises 141 residues: MALMQDFKKFAMRGNVIDLAVGVIIGAAFGKIVDSLVNDLIMPLVARIVGKLDFSNLFIQLADAPAGVPQTLADLKKAGVPVFAYGNFITVAVNFLILAFIVFLMVRAITRVIDTNPPPADTPENTLLLRDIRDSLKSKNQ.

2 helical membrane-spanning segments follow: residues 16–36 (VIDLAVGVIIGAAFGKIVDSL) and 86–106 (GNFITVAVNFLILAFIVFLMV).

This sequence belongs to the MscL family. Homopentamer.

It is found in the cell inner membrane. Channel that opens in response to stretch forces in the membrane lipid bilayer. May participate in the regulation of osmotic pressure changes within the cell. This is Large-conductance mechanosensitive channel from Ralstonia nicotianae (strain ATCC BAA-1114 / GMI1000) (Ralstonia solanacearum).